The chain runs to 163 residues: Transcriptional repressor NrdR (163 aa).

The segment at 1–22 (MRCPKCQSLKSSVIDSRQAEDG) is disordered. Residues 3-34 (CPKCQSLKSSVIDSRQAEDGNTIRRRRSCDQC) fold into a zinc finger. Residues 49 to 139 (LVVVKKDGTR…VYRSFKDVGE (91 aa)) form the ATP-cone domain.

The protein belongs to the NrdR family. Requires Zn(2+) as cofactor.

In terms of biological role, negatively regulates transcription of bacterial ribonucleotide reductase nrd genes and operons by binding to NrdR-boxes. In Streptococcus suis (strain 98HAH33), this protein is Transcriptional repressor NrdR.